The sequence spans 253 residues: Vitamin B12 import ATP-binding protein BtuD (253 aa).

In terms of domain architecture, ABC transporter spans 4–236; that stretch reads LQLSNVSVDT…NILSEVFEVD (233 aa). 32–39 contacts ATP; sequence GPNGAGKS.

The protein belongs to the ABC transporter superfamily. Vitamin B12 importer (TC 3.A.1.13.1) family. As to quaternary structure, the complex is composed of two ATP-binding proteins (BtuD), two transmembrane proteins (BtuC) and a solute-binding protein (BtuF).

The protein resides in the cell inner membrane. It catalyses the reaction an R-cob(III)alamin(out) + ATP + H2O = an R-cob(III)alamin(in) + ADP + phosphate + H(+). Part of the ABC transporter complex BtuCDF involved in vitamin B12 import. Responsible for energy coupling to the transport system. This Yersinia enterocolitica serotype O:8 / biotype 1B (strain NCTC 13174 / 8081) protein is Vitamin B12 import ATP-binding protein BtuD.